Reading from the N-terminus, the 252-residue chain is Large ribosomal subunit protein uL4 (252 aa).

The protein belongs to the universal ribosomal protein uL4 family. As to quaternary structure, part of the 50S ribosomal subunit.

Its function is as follows. One of the primary rRNA binding proteins, this protein initially binds near the 5'-end of the 23S rRNA. It is important during the early stages of 50S assembly. It makes multiple contacts with different domains of the 23S rRNA in the assembled 50S subunit and ribosome. Functionally, forms part of the polypeptide exit tunnel. The chain is Large ribosomal subunit protein uL4 from Methanococcus maripaludis (strain C6 / ATCC BAA-1332).